Reading from the N-terminus, the 313-residue chain is D-alanine--D-alanine ligase (313 aa).

In terms of domain architecture, ATP-grasp spans 108 to 308 (KLVWQQTGVP…YSELVVKVLS (201 aa)). 138–193 (VAKLGLPLFVKPASEGSSVAVLKVKTADALPAALAEAATHDKIVIVEKSIEGGGEY) lines the ATP pocket. Residues Asp262, Glu275, and Asn277 each contribute to the Mg(2+) site.

Belongs to the D-alanine--D-alanine ligase family. Mg(2+) serves as cofactor. Mn(2+) is required as a cofactor.

It localises to the cytoplasm. The enzyme catalyses 2 D-alanine + ATP = D-alanyl-D-alanine + ADP + phosphate + H(+). It functions in the pathway cell wall biogenesis; peptidoglycan biosynthesis. Cell wall formation. The polypeptide is D-alanine--D-alanine ligase (Burkholderia orbicola (strain MC0-3)).